The chain runs to 306 residues: NAD kinase 1 (306 aa).

Aspartate 67 (proton acceptor) is an active-site residue. Residues 67 to 68 (DG), 149 to 150 (ND), and aspartate 181 contribute to the NAD(+) site.

This sequence belongs to the NAD kinase family. A divalent metal cation serves as cofactor.

The protein resides in the cytoplasm. The catalysed reaction is NAD(+) + ATP = ADP + NADP(+) + H(+). Functionally, involved in the regulation of the intracellular balance of NAD and NADP, and is a key enzyme in the biosynthesis of NADP. Catalyzes specifically the phosphorylation on 2'-hydroxyl of the adenosine moiety of NAD to yield NADP. In Synechococcus sp. (strain ATCC 27144 / PCC 6301 / SAUG 1402/1) (Anacystis nidulans), this protein is NAD kinase 1.